Reading from the N-terminus, the 109-residue chain is Flagellar hook-basal body complex protein FliE (109 aa).

It belongs to the FliE family.

It is found in the bacterial flagellum basal body. The protein is Flagellar hook-basal body complex protein FliE of Pseudomonas fluorescens (strain SBW25).